The following is an 859-amino-acid chain: Bifunctional levopimaradiene synthase, chloroplastic (859 aa).

The transit peptide at 1 to 52 (MALLSSSLSSHIPTGAHHLTLNAYANTQCIPHFFSTLNAGTSAGKRSSLYLR) directs the protein to the chloroplast. 6 residues coordinate Mg(2+): Asp392, Asp394, Asp611, Asp615, Asn755, and Glu763. Residues 392–395 (DIDD) carry the DXDD motif motif. The short motif at 611-615 (DDLYD) is the DDXXD motif element.

It belongs to the terpene synthase family. Tpsd subfamily. Mg(2+) is required as a cofactor. It depends on Mn(2+) as a cofactor.

It is found in the plastid. Its subcellular location is the chloroplast. It carries out the reaction (+)-copalyl diphosphate = abieta-8(14),12-diene + diphosphate. The catalysed reaction is (+)-copalyl diphosphate = abieta-7,13-diene + diphosphate. Its pathway is secondary metabolite biosynthesis; terpenoid biosynthesis. It participates in terpene metabolism; oleoresin biosynthesis. Its function is as follows. Terpene synthase (di-TPS) involved in the biosynthesis of diterpene natural products included in conifer oleoresin secretions and volatile emissions; these compounds contribute to biotic and abiotic stress defense against herbivores and pathogens. Catalyzes the conversion of (+)-copalyl diphosphate ((+)-CPP) to isopimaradiene. In Picea sitchensis (Sitka spruce), this protein is Bifunctional levopimaradiene synthase, chloroplastic.